A 99-amino-acid polypeptide reads, in one-letter code: DNA-directed RNA polymerase subunit omega (99 aa).

It belongs to the RNA polymerase subunit omega family. As to quaternary structure, the RNAP catalytic core consists of 2 alpha, 1 beta, 1 beta' and 1 omega subunit. When a sigma factor is associated with the core the holoenzyme is formed, which can initiate transcription.

The catalysed reaction is RNA(n) + a ribonucleoside 5'-triphosphate = RNA(n+1) + diphosphate. Promotes RNA polymerase assembly. Latches the N- and C-terminal regions of the beta' subunit thereby facilitating its interaction with the beta and alpha subunits. In Deinococcus deserti (strain DSM 17065 / CIP 109153 / LMG 22923 / VCD115), this protein is DNA-directed RNA polymerase subunit omega.